We begin with the raw amino-acid sequence, 990 residues long: Sister chromatid cohesion protein PDS5 homolog E (990 aa).

HEAT repeat units follow at residues 31–57 (DATLSLLEVMESLLATVEQDLSSSVQK), 58–96 (ALHPPMRALVSADLLRNPDSDVRVSVVSCLTEIMRITAP), 153–190 (DLVLEMFQRFLKIIRPDHPQLVLVSMETIMITVIDESE), 191–228 (EVPMDLLEILLTTVKKDSQDVSPAALTLVEKVLSSCTC), and 232–269 (PCIMEALKSSGTSLDMYSPVVSSICQSEFATTQAHNDV). The segment at 262 to 565 (TTQAHNDVKP…AGEEVESNTN (304 aa)) is disordered. Residues 267–281 (NDVKPKDNEADEKIS) are compositionally biased toward basic and acidic residues. Residues 302–314 (KGTRSKRSARGGT) show a composition bias toward basic residues. Polar residues-rich tracts occupy residues 328–342 (EGLSESTDAETASGS) and 394–410 (VGQTNQSVVISLSSSGR). Basic and acidic residues-rich tracts occupy residues 421-430 (TKMEETDHDV), 448-477 (PAKEDLTKSNVKKHEDGIKTGKSSKKEKAD), and 503-512 (VHSDAKKKNS). Positions 458-465 (VKKHEDGI) match the Nuclear localization signal 1 motif. Short sequence motifs (nuclear localization signal) lie at residues 539–546 (TKKSEQAP) and 583–590 (DKKFYEGV). The segment at 653-966 (KKRKIVSKNV…VGNEAEEDDQ (314 aa)) is disordered. The span at 662–673 (VEPSSSPEVRSS) shows a compositional bias: low complexity. 2 consecutive short sequence motifs (nuclear localization signal) follow at residues 677–684 (MKKKDSVT) and 715–722 (LKKLNGEP). Residues 727–742 (GRTGKKQKVTQAMHRK) are compositionally biased toward basic residues. Over residues 746–760 (DCDEQEDLETKDEED) the composition is skewed to acidic residues. Basic and acidic residues-rich tracts occupy residues 761 to 810 (SLKL…KTNG), 819 to 890 (TDGK…KETN), and 898 to 947 (EEQK…DKET).

This sequence belongs to the PDS5 family. Interacts with the cohesin complex.

It localises to the nucleus. Functionally, cohesin cofactor dispensable during the meiotic division but playing an important role in DNA repair by homologous recombination (HR) probably by helping SMC5/SMC6 complex. Regulator of sister chromatid cohesion in mitosis which may stabilize cohesin complex association with chromatin. May couple sister chromatid cohesion during mitosis to DNA replication. Cohesion ensures that chromosome partitioning is accurate in both meiotic and mitotic cells and plays an important role in DNA repair. This chain is Sister chromatid cohesion protein PDS5 homolog E, found in Arabidopsis thaliana (Mouse-ear cress).